The sequence spans 518 residues: Nicotine N-demethylase CYP82E3 (518 aa).

A helical membrane pass occupies residues 2 to 22; the sequence is VFPVEAIVGLVTFTFLFYFLW. Residue lysine 254 forms a Glycyl lysine isopeptide (Lys-Gly) (interchain with G-Cter in ubiquitin) linkage. Cysteine 458 contributes to the heme binding site.

The protein belongs to the cytochrome P450 family. CYP82E2 subfamily. It depends on heme as a cofactor. Expressed in leaves.

Its subcellular location is the membrane. It carries out the reaction (S)-nicotine + reduced [NADPH--hemoprotein reductase] + O2 = (S)-nornicotine + formaldehyde + oxidized [NADPH--hemoprotein reductase] + H2O + H(+). It participates in alkaloid biosynthesis; nicotine biosynthesis. Its function is as follows. Involved in the biosynthesis of pyridine alkaloid natural products, leading mainly to the production of anabasine, anatabine, nicotine and nornicotine, effective deterrents against herbivores with antiparasitic and pesticide properties (neurotoxins); nornicotine serves as the precursor in the synthesis of the carcinogen compound N'-nitrosonornicotine (NNN). Catalyzes the demethylation of nicotine to form nornicotine. This is Nicotine N-demethylase CYP82E3 from Nicotiana tomentosiformis (Tobacco).